The primary structure comprises 235 residues: NAD(P)H-hydrate epimerase (235 aa).

One can recognise a YjeF N-terminal domain in the interval 12 to 218 (AIVMDQLLMG…EFLKETNLTI (207 aa)). (6S)-NADPHX is bound at residue 62-66 (NNGGD). K(+) is bound by residues Asn63 and Asp127. (6S)-NADPHX is bound by residues 131-137 (GYSFKGD) and Asp161. Ser164 serves as a coordination point for K(+).

Belongs to the NnrE/AIBP family. Requires K(+) as cofactor.

It carries out the reaction (6R)-NADHX = (6S)-NADHX. It catalyses the reaction (6R)-NADPHX = (6S)-NADPHX. Its function is as follows. Catalyzes the epimerization of the S- and R-forms of NAD(P)HX, a damaged form of NAD(P)H that is a result of enzymatic or heat-dependent hydration. This is a prerequisite for the S-specific NAD(P)H-hydrate dehydratase to allow the repair of both epimers of NAD(P)HX. The sequence is that of NAD(P)H-hydrate epimerase from Dictyostelium discoideum (Social amoeba).